A 132-amino-acid chain; its full sequence is Phosphomevalonate dehydratase small subunit (132 aa).

The active-site Proton acceptor is Ser-58.

This sequence belongs to the AcnX type II small subunit family. As to quaternary structure, heterodimer composed of a large subunit (PMDh-L) and a small subunit (PMDh-S).

It carries out the reaction (R)-5-phosphomevalonate = (2E)-3-methyl-5-phosphooxypent-2-enoate + H2O. The protein operates within isoprenoid biosynthesis; isopentenyl diphosphate biosynthesis via mevalonate pathway. With respect to regulation, neither the addition of 1 mM Mg(2+) nor 1 mM Mn(2+) has a significant effect on the activity, whereas Zn(2+) causes almost complete inactivation. Strongly inhibited by H(2)O(2), but not by EDTA or iodoacetamide. Functionally, component of a hydro-lyase that catalyzes the dehydration of mevalonate 5-phosphate (MVA5P) to form trans-anhydromevalonate 5-phosphate (tAHMP). Involved in the archaeal mevalonate (MVA) pathway, which provides fundamental precursors for isoprenoid biosynthesis, such as isopentenyl diphosphate (IPP) and dimethylallyl diphosphate (DMAPP). The polypeptide is Phosphomevalonate dehydratase small subunit (Aeropyrum pernix (strain ATCC 700893 / DSM 11879 / JCM 9820 / NBRC 100138 / K1)).